We begin with the raw amino-acid sequence, 628 residues long: Forkhead box protein O (628 aa).

5 disordered regions span residues 39 to 77, 182 to 205, 217 to 269, 316 to 359, and 389 to 415; these read RARSNTWPCPRPENFVEPTDELDSTKASNQQLAPGDSQQ, KSVRRRAASMETSRYEKRRGRAKK, GLND…RLSP, QQQG…APGY, and NSVTTTMSPAYPNSEPSSDSLNTYSNV. Threonine 44 carries the phosphothreonine; by PKB/AKT1 modification. Polar residues predominate over residues 63-77; it reads TKASNQQLAPGDSQQ. Serine 75 bears the Phosphoserine mark. Residues 95-201 constitute a DNA-binding region (fork-head); that stretch reads WGNLSYADLI…ETSRYEKRRG (107 aa). Serine 190 carries the phosphoserine; by PKB/AKT1 modification. 2 stretches are compositionally biased toward polar residues: residues 221–230 and 256–265; these read ATPSPSSSVS and RASSNASSCG. Position 259 is a phosphoserine; by PKB/AKT1 (serine 259). Phosphoserine occurs at positions 262, 263, and 268. Over residues 328 to 337 the composition is skewed to pro residues; the sequence is SQPPPPPYQP. Positions 338–351 are enriched in low complexity; sequence PQHQQAQQQQSPYA. Residues 402–414 show a composition bias toward polar residues; the sequence is SEPSSDSLNTYSN.

In terms of assembly, interacts with melt.

Its subcellular location is the cytoplasm. The protein localises to the nucleus. Its function is as follows. Transcription factor involved in the regulation of the insulin signaling pathway. Consistently activates both the downstream target Thor\d4EBP and the feedback control target InR. Involved in negative regulation of the cell cycle, modulating cell growth and proliferation. In response to cellular stresses, such as nutrient deprivation or increased levels of reactive oxygen species, foxo is activated and inhibits growth through the action of target genes such as Thor. Foxo activated in the adult fat body can regulate lifespan in adults; an insulin peptide itself may function as one secondary messenger of insulin-regulated aging. Also regulates Lip4, homolog of human acid lipases, thereby acting as a key modulator of lipid metabolism by insulin signaling and integrates insulin responses to glucose and lipid homeostasis. The polypeptide is Forkhead box protein O (Drosophila yakuba (Fruit fly)).